Reading from the N-terminus, the 607-residue chain is 1-deoxy-D-xylulose-5-phosphate synthase (607 aa).

Thiamine diphosphate is bound by residues His63 and 104 to 106 (GHS). Asp135 contributes to the Mg(2+) binding site. Residues 136–137 (GA), Asn164, Tyr271, and Glu351 each bind thiamine diphosphate. Residue Asn164 participates in Mg(2+) binding.

This sequence belongs to the transketolase family. DXPS subfamily. In terms of assembly, homodimer. The cofactor is Mg(2+). It depends on thiamine diphosphate as a cofactor.

The catalysed reaction is D-glyceraldehyde 3-phosphate + pyruvate + H(+) = 1-deoxy-D-xylulose 5-phosphate + CO2. It participates in metabolic intermediate biosynthesis; 1-deoxy-D-xylulose 5-phosphate biosynthesis; 1-deoxy-D-xylulose 5-phosphate from D-glyceraldehyde 3-phosphate and pyruvate: step 1/1. Its function is as follows. Catalyzes the acyloin condensation reaction between C atoms 2 and 3 of pyruvate and glyceraldehyde 3-phosphate to yield 1-deoxy-D-xylulose-5-phosphate (DXP). In Campylobacter hominis (strain ATCC BAA-381 / DSM 21671 / CCUG 45161 / LMG 19568 / NCTC 13146 / CH001A), this protein is 1-deoxy-D-xylulose-5-phosphate synthase.